A 206-amino-acid chain; its full sequence is ATP phosphoribosyltransferase (206 aa).

The protein belongs to the ATP phosphoribosyltransferase family. Short subfamily. In terms of assembly, heteromultimer composed of HisG and HisZ subunits.

It localises to the cytoplasm. The enzyme catalyses 1-(5-phospho-beta-D-ribosyl)-ATP + diphosphate = 5-phospho-alpha-D-ribose 1-diphosphate + ATP. Its pathway is amino-acid biosynthesis; L-histidine biosynthesis; L-histidine from 5-phospho-alpha-D-ribose 1-diphosphate: step 1/9. Catalyzes the condensation of ATP and 5-phosphoribose 1-diphosphate to form N'-(5'-phosphoribosyl)-ATP (PR-ATP). Has a crucial role in the pathway because the rate of histidine biosynthesis seems to be controlled primarily by regulation of HisG enzymatic activity. The chain is ATP phosphoribosyltransferase from Leptospira interrogans serogroup Icterohaemorrhagiae serovar copenhageni (strain Fiocruz L1-130).